The following is an 899-amino-acid chain: Protein translocase subunit SecA (899 aa).

ATP-binding positions include Gln-87, 105-109 (GEGKT), and Asp-516. Zn(2+) contacts are provided by Cys-884, Cys-886, Cys-895, and His-896.

This sequence belongs to the SecA family. As to quaternary structure, monomer and homodimer. Part of the essential Sec protein translocation apparatus which comprises SecA, SecYEG and auxiliary proteins SecDF. Other proteins may also be involved. Zn(2+) serves as cofactor.

Its subcellular location is the cell inner membrane. It is found in the cytoplasm. It carries out the reaction ATP + H2O + cellular proteinSide 1 = ADP + phosphate + cellular proteinSide 2.. Functionally, part of the Sec protein translocase complex. Interacts with the SecYEG preprotein conducting channel. Has a central role in coupling the hydrolysis of ATP to the transfer of proteins into and across the cell membrane, serving as an ATP-driven molecular motor driving the stepwise translocation of polypeptide chains across the membrane. The chain is Protein translocase subunit SecA from Borrelia garinii subsp. bavariensis (strain ATCC BAA-2496 / DSM 23469 / PBi) (Borreliella bavariensis).